We begin with the raw amino-acid sequence, 250 residues long: Probable transcriptional regulatory protein SYNPCC7002_A1640 (250 aa).

The protein belongs to the TACO1 family.

Its subcellular location is the cytoplasm. The chain is Probable transcriptional regulatory protein SYNPCC7002_A1640 from Picosynechococcus sp. (strain ATCC 27264 / PCC 7002 / PR-6) (Agmenellum quadruplicatum).